The following is a 238-amino-acid chain: MSSGYSSLEEDAEDFFFTARTSFFRRAPQGKPRSGQQDVEKEKETHSYLSKEEIKEKVHKYNLAVTDKLKMTLNSNGIYTGFIKVQMELCKPPQTSPNSGKLSPSSNGCMNTLHISSTNTVGEVIEALLKKFLVTESPAKFALYKRCHREDQVYACKLSDREHPLYLRLVAGPRTDTLSFVLREHEIGEWEAFSLPELQNFLRILDKEEDEQLQNLKRRYTAYRQKLEEALREVWKPD.

At S2 the chain carries N-acetylserine. Residues 26-48 are disordered; it reads RAPQGKPRSGQQDVEKEKETHSY. The segment covering 38 to 48 has biased composition (basic and acidic residues); the sequence is DVEKEKETHSY. In terms of domain architecture, Ras-associating spans 79–186; the sequence is YTGFIKVQME…TLSFVLREHE (108 aa). The SARAH domain occupies 187-234; that stretch reads IGEWEAFSLPELQNFLRILDKEEDEQLQNLKRRYTAYRQKLEEALREV.

Widely expressed.

It localises to the cytoplasm. The protein localises to the cytoskeleton. The sequence is that of Ras association domain-containing protein 3 (RASSF3) from Homo sapiens (Human).